Here is a 348-residue protein sequence, read N- to C-terminus: Probable mitochondrial adenine nucleotide transporter BTL1 (348 aa).

Solcar repeat units follow at residues 46–129, 157–241, and 251–338; these read SREA…VKRA, SWIS…MKTS, and LSRP…WKDI. A run of 6 helical transmembrane segments spans residues 52–72, 104–124, 156–176, 213–233, 256–276, and 321–341; these read FLSG…LETI, GNEI…GTFE, ISWI…STLV, FYAG…CYYF, MLVL…PLEV, and VMPS…ILLA.

Belongs to the mitochondrial carrier (TC 2.A.29) family.

It localises to the mitochondrion inner membrane. Probable mitochondrial adenylate carrier that catalyzes the transport of ATP, ADP and AMP. The polypeptide is Probable mitochondrial adenine nucleotide transporter BTL1 (Arabidopsis thaliana (Mouse-ear cress)).